A 379-amino-acid polypeptide reads, in one-letter code: Homoserine O-succinyltransferase (379 aa).

The 310-residue stretch at 48-357 (NAVLICHALS…SAHGHDAFLM (310 aa)) folds into the AB hydrolase-1 domain. Serine 154 serves as the catalytic Nucleophile. Arginine 224 provides a ligand contact to substrate. Catalysis depends on residues aspartate 319 and histidine 352. Aspartate 353 serves as a coordination point for substrate.

This sequence belongs to the AB hydrolase superfamily. MetX family. In terms of assembly, homodimer.

It localises to the cytoplasm. It carries out the reaction L-homoserine + succinyl-CoA = O-succinyl-L-homoserine + CoA. It participates in amino-acid biosynthesis; L-methionine biosynthesis via de novo pathway; O-succinyl-L-homoserine from L-homoserine: step 1/1. In terms of biological role, transfers a succinyl group from succinyl-CoA to L-homoserine, forming succinyl-L-homoserine. The chain is Homoserine O-succinyltransferase from Neisseria meningitidis serogroup B (strain ATCC BAA-335 / MC58).